The chain runs to 190 residues: Adenine phosphoribosyltransferase (190 aa).

Belongs to the purine/pyrimidine phosphoribosyltransferase family. In terms of assembly, homodimer.

The protein localises to the cytoplasm. The enzyme catalyses AMP + diphosphate = 5-phospho-alpha-D-ribose 1-diphosphate + adenine. It functions in the pathway purine metabolism; AMP biosynthesis via salvage pathway; AMP from adenine: step 1/1. In terms of biological role, catalyzes a salvage reaction resulting in the formation of AMP, that is energically less costly than de novo synthesis. In Cupriavidus pinatubonensis (strain JMP 134 / LMG 1197) (Cupriavidus necator (strain JMP 134)), this protein is Adenine phosphoribosyltransferase.